The chain runs to 334 residues: GTP 3',8-cyclase (334 aa).

The Radical SAM core domain occupies 13–239 (RFQRKFYYLR…KARADNDGPA (227 aa)). GTP is bound at residue Arg-22. 2 residues coordinate [4Fe-4S] cluster: Cys-29 and Cys-33. Tyr-35 is a binding site for S-adenosyl-L-methionine. Residue Cys-36 participates in [4Fe-4S] cluster binding. Arg-73 contacts GTP. Gly-77 contacts S-adenosyl-L-methionine. Thr-104 is a GTP binding site. Ser-128 serves as a coordination point for S-adenosyl-L-methionine. Lys-165 is a binding site for GTP. Met-199 contributes to the S-adenosyl-L-methionine binding site. Positions 262 and 265 each coordinate [4Fe-4S] cluster. A GTP-binding site is contributed by 267–269 (RLR). Position 279 (Cys-279) interacts with [4Fe-4S] cluster.

This sequence belongs to the radical SAM superfamily. MoaA family. Monomer and homodimer. [4Fe-4S] cluster serves as cofactor.

It carries out the reaction GTP + AH2 + S-adenosyl-L-methionine = (8S)-3',8-cyclo-7,8-dihydroguanosine 5'-triphosphate + 5'-deoxyadenosine + L-methionine + A + H(+). The protein operates within cofactor biosynthesis; molybdopterin biosynthesis. In terms of biological role, catalyzes the cyclization of GTP to (8S)-3',8-cyclo-7,8-dihydroguanosine 5'-triphosphate. The sequence is that of GTP 3',8-cyclase from Vibrio cholerae serotype O1 (strain M66-2).